Reading from the N-terminus, the 702-residue chain is Protein sepa-1 (702 aa).

A required for self-association and interaction with pgl-3 region spans residues 39–160 (RQRFCYEKTD…KESTSYGQFR (122 aa)). 3 consecutive short sequence motifs (LIR) follow at residues 107–110 (FVEV), 247–250 (FQKI), and 298–301 (FGFV). The disordered stretch occupies residues 450-471 (AKDPEEPTTAASEGGNTYGYQE). The span at 458–468 (TAASEGGNTYG) shows a compositional bias: polar residues. The LIR 4 signature appears at 469-472 (YQEL). Residues 508–543 (AAMDKKKKRRELKSRLNKINAQIDELEKRRMERAGK) are a coiled coil. The tract at residues 545-564 (QVVSSSVPSEEAAQVEAPAS) is disordered. The 78-residue stretch at 597–674 (NTSKEWIVED…TVDQILKKTL (78 aa)) folds into the KIX domain. Basic and acidic residues predominate over residues 675 to 685 (KKDQRATEHNH). The tract at residues 675–702 (KKDQRATEHNHQQPTQSSDELAKNHEKN) is disordered.

In terms of assembly, self-associates. Interacts (via the LIR motifs) with lgg-1; the interaction is direct. Interacts (via the LIR motifs) with lgg-2; the interaction is direct. Interacts with pgl-3; interaction is enhanced in the presence of RNA. Interacts with epg-2; may be modulated by prmt-1. Post-translationally, degraded by autophagy.

The protein resides in the nucleus. The protein localises to the cytoplasm. It localises to the cytoplasmic granule. Functionally, adapter protein that connects P-granules in somatic cells with the autophagic machinery. Association with other adapters such as epg-2 and P-granule components such as pgl-3 is required for the accumulation and degradation of P-granules by autophagy in somatic cells. This ensures exclusive localization of the P-granules in germ cells. The protein is Protein sepa-1 of Caenorhabditis elegans.